We begin with the raw amino-acid sequence, 366 residues long: Probable neutral protease 2 homolog B (366 aa).

Residues 1–19 (MQVIVALAALSSLAAPALG) form the signal peptide. Positions 20–189 (FSIPRGVPVS…RGPRSRITKR (170 aa)) are excised as a propeptide. Cystine bridges form between Cys-197/Cys-267, Cys-274/Cys-292, and Cys-306/Cys-366. Residue His-317 coordinates Zn(2+). The active site involves Glu-318. Positions 321 and 332 each coordinate Zn(2+).

The protein belongs to the peptidase M35 family. The cofactor is Zn(2+).

The protein localises to the secreted. It carries out the reaction Preferential cleavage of bonds with hydrophobic residues in P1'. Also 3-Asn-|-Gln-4 and 8-Gly-|-Ser-9 bonds in insulin B chain.. Its function is as follows. Probable secreted metalloprotease that shows high activities on basic nuclear substrates such as histone and protamine. May be involved in virulence. The chain is Probable neutral protease 2 homolog B (NpII-B) from Trichophyton rubrum (Athlete's foot fungus).